The primary structure comprises 217 residues: Chloramphenicol acetyltransferase (217 aa).

Residue H193 is the Proton acceptor of the active site.

It belongs to the chloramphenicol acetyltransferase family. Homotrimer.

It carries out the reaction chloramphenicol + acetyl-CoA = chloramphenicol 3-acetate + CoA. Its function is as follows. This enzyme is an effector of chloramphenicol resistance in bacteria. This Proteus mirabilis protein is Chloramphenicol acetyltransferase (cat).